A 184-amino-acid chain; its full sequence is Ribosome-recycling factor (184 aa).

This sequence belongs to the RRF family.

It localises to the cytoplasm. In terms of biological role, responsible for the release of ribosomes from messenger RNA at the termination of protein biosynthesis. May increase the efficiency of translation by recycling ribosomes from one round of translation to another. This Acholeplasma laidlawii (strain PG-8A) protein is Ribosome-recycling factor.